Consider the following 430-residue polypeptide: Glutamate-1-semialdehyde 2,1-aminomutase (430 aa).

Lysine 265 carries the post-translational modification N6-(pyridoxal phosphate)lysine.

The protein belongs to the class-III pyridoxal-phosphate-dependent aminotransferase family. HemL subfamily. In terms of assembly, homodimer. Pyridoxal 5'-phosphate serves as cofactor.

The protein resides in the cytoplasm. The enzyme catalyses (S)-4-amino-5-oxopentanoate = 5-aminolevulinate. It functions in the pathway porphyrin-containing compound metabolism; protoporphyrin-IX biosynthesis; 5-aminolevulinate from L-glutamyl-tRNA(Glu): step 2/2. The sequence is that of Glutamate-1-semialdehyde 2,1-aminomutase from Helicobacter pylori (strain Shi470).